The sequence spans 143 residues: Cofilin (143 aa).

Positions 5–137 (GVAVADESLN…AYESVLEKVS (133 aa)) constitute an ADF-H domain.

Belongs to the actin-binding proteins ADF family.

It localises to the cytoplasm. Its subcellular location is the cytoskeleton. The protein localises to the nucleus matrix. Controls reversibly actin polymerization and depolymerization in a pH-sensitive manner. It has the ability to bind G- and F-actin in a 1:1 ratio of cofilin to actin. Binding to F-actin is regulated by tropomyosin. It is the major component of intranuclear and cytoplasmic actin rods. Required for accumulation of actin at the cell division site via depolymerizing actin at the cell ends. In association with myosin II has a role in the assembly of the contractile ring via severing actin filaments. Involved in the maintenance of the contractile ring once formed. In association with profilin and capping protein, has a role in the mitotic reorganization of the actin cytoskeleton. This Kluyveromyces lactis (strain ATCC 8585 / CBS 2359 / DSM 70799 / NBRC 1267 / NRRL Y-1140 / WM37) (Yeast) protein is Cofilin (COF1).